The chain runs to 409 residues: LIM/homeobox protein ttx-3 (409 aa).

LIM zinc-binding domains are found at residues 108–169 and 171–232; these read NQCC…RYQK and CRKC…VRST. Disordered stretches follow at residues 245 to 299 and 372 to 409; these read AVVA…RTSF and MNPPLSSSSSGHSTDGYQLNTPPLSSEIYSPNSNYTHL. A compositionally biased stretch (pro residues) spans 247–267; the sequence is VAPPPPPPTTTTAPPPAAPEQ. The homeobox DNA-binding region spans 292-351; sequence SKRMRTSFKHHQLRAMKTYFALNHNPDAKDLKQLAAKTNLTKRVLQVWFQNARAKYRREL. The span at 382–409 shows a compositional bias: polar residues; it reads GHSTDGYQLNTPPLSSEIYSPNSNYTHL.

As to expression, expressed in the AIA, AIN and AIY interneurons, and in the NSM neurons. Expressed also in ADL and ASI sensory neurons in 60-70% of L2 larvae. Expression is also detected in head muscles of embryos and some early larvae but not late larvae or adults.

It is found in the nucleus. The protein resides in the perikaryon. The protein localises to the cell projection. Its subcellular location is the axon. Its function is as follows. Transcription factor. Binds to a sequence motif, 5'-TTATTGGCTTCGTTAA-3', which may be involved in AIY interneuron function, in the regulatory elements of target genes; binding is more efficient, in vitro, together with homeobox protein ceh-10. Required for specification of the AIA and AIY interneurons and the NSM neurons. Positively regulates the expression of a number of genes including ceh-10, ceh-23, kal-1, hen-1, ser-2, unc-17 and sra-11 in AIY neurons, and cat-4, flp-4, bas-1, ptps-1 and mgl-1 in NSM neurons. In concert with WNT/beta-catenin signaling, initiates expression of homeobox ceh-10 in AIY, but not in the sister cells, SMDD motor neurons. Also acts in an autoregulatory feedback loop to maintain its own expression. Plays a role in the thermotactic response, olfactory imprinting, regulation of longevity, control of dauer formation and axon outgrowth and pathfinding. Not required for normal chemosensory behavior. The sequence is that of LIM/homeobox protein ttx-3 from Caenorhabditis elegans.